The following is a 318-amino-acid chain: MEVLESKPLSAISMVIDAIGVEHDSQNKCYCCNEQIFDRFICRMDNRSYHENCVKCAICESPLAEKCFWKNGTIYCSQHYYKDYSAHRCAGCKKGVSPTDMVYKLKAGLVFHVECHCCTLCGRHLSPGEQILVDDTMMTVSCMSHYPLPMDDPCPPVGPSDVPSCSSDASAVAPYPMDESFPFQIKKEVDAYGYNFEHYSFSDFCDDDSRMLKRRGPRTTIRQNQLDVLNEMFSNTPKPSKHARAKLALETGLSMRVIQVWFQNRRSKERRLKHLCNYLRHYEQRGLIPPPIHFRNEEMDGTDFNSFCGNFEEEDDED.

2 LIM zinc-binding domains span residues 27 to 86 and 87 to 152; these read NKCY…DYSA and HRCA…PMDD. Residues 214–273 constitute a DNA-binding region (homeobox); that stretch reads RRGPRTTIRQNQLDVLNEMFSNTPKPSKHARAKLALETGLSMRVIQVWFQNRRSKERRLK.

Its subcellular location is the nucleus. Specifies differentiation of the set of six touch receptor neurons. Binds cooperatively as a heterodimer with unc-86 to sites in the mec-3 gene promoter. The chain is Mechanosensory protein 3 (mec-3) from Caenorhabditis briggsae.